Consider the following 560-residue polypeptide: (E)-beta-farnesene synthase (560 aa).

4 residues coordinate Mg(2+): Asp312, Asp316, Asp457, and Glu465. Positions 312-316 match the DDXXD motif motif; sequence DDTFD.

It belongs to the terpene synthase family. The cofactor is Mg(2+). It depends on Co(2+) as a cofactor. Requires Mn(2+) as cofactor.

The protein localises to the cytoplasm. It carries out the reaction (2E,6E)-farnesyl diphosphate = (E)-beta-farnesene + diphosphate. It functions in the pathway secondary metabolite biosynthesis; terpenoid biosynthesis. Sesquiterpene cyclase catalyzing the production of beta-farnesene from farnesyl diphosphate. The chain is (E)-beta-farnesene synthase from Citrus junos (Yuzu).